A 20-amino-acid chain; its full sequence is Agglutinin beta-2 chain (20 aa).

A disordered region spans residues 1-20; that stretch reads GRNGKSQSIIVGPWGDRVTN.

This sequence belongs to the jacalin lectin family. As to quaternary structure, formed of four alpha chains and four beta chains.

In terms of biological role, D-galactose-specific lectin, binds the T-antigen structure Gal-beta1,3-GalNAc. The protein is Agglutinin beta-2 chain of Maclura pomifera (Osage orange).